A 440-amino-acid polypeptide reads, in one-letter code: Elongation factor 1-alpha (440 aa).

One can recognise a tr-type G domain in the interval 5-228; sequence KPHINLVVIG…ALDTYIQPPK (224 aa). Residues 14 to 21 are G1; that stretch reads GHVDHGKS. 14–21 is a GTP binding site; sequence GHVDHGKS. Ser-21 provides a ligand contact to Mg(2+). Positions 70–74 are G2; sequence GVTID. Positions 91–94 are G3; it reads DAPG. GTP contacts are provided by residues 91–95 and 153–156; these read DAPGH and NKMD. A G4 region spans residues 153 to 156; it reads NKMD. Residues 194 to 196 are G5; it reads SAW.

Belongs to the TRAFAC class translation factor GTPase superfamily. Classic translation factor GTPase family. EF-Tu/EF-1A subfamily.

The protein resides in the cytoplasm. The catalysed reaction is GTP + H2O = GDP + phosphate + H(+). Its function is as follows. GTP hydrolase that promotes the GTP-dependent binding of aminoacyl-tRNA to the A-site of ribosomes during protein biosynthesis. This chain is Elongation factor 1-alpha, found in Hyperthermus butylicus (strain DSM 5456 / JCM 9403 / PLM1-5).